The primary structure comprises 507 residues: ATP synthase subunit alpha (507 aa).

Position 169-176 (169-176 (GDRQTGKT)) interacts with ATP.

Belongs to the ATPase alpha/beta chains family. F-type ATPases have 2 components, CF(1) - the catalytic core - and CF(0) - the membrane proton channel. CF(1) has five subunits: alpha(3), beta(3), gamma(1), delta(1), epsilon(1). CF(0) has three main subunits: a(1), b(2) and c(9-12). The alpha and beta chains form an alternating ring which encloses part of the gamma chain. CF(1) is attached to CF(0) by a central stalk formed by the gamma and epsilon chains, while a peripheral stalk is formed by the delta and b chains. In this bacterium the a and b subunits are transcribed but do not seem to be translated, thus the ATP synthase consists of the alpha, beta, gamma, delta, epsilon and c subunits.

Its subcellular location is the cell membrane. It carries out the reaction ATP + H2O + 4 H(+)(in) = ADP + phosphate + 5 H(+)(out). Functionally, produces ATP from ADP in the presence of a proton gradient across the membrane. The alpha chain is a regulatory subunit. The polypeptide is ATP synthase subunit alpha (Moorella thermoacetica (strain ATCC 39073 / JCM 9320)).